Reading from the N-terminus, the 519-residue chain is MSGLLYALLIIPMIGIFFILSFDSYNFNITSNNSNSGSFSEAGAGKNSGGELLKVLVINNELNFYKKIAFITTIMNLIVSLIIYILFDFSTNQFQFVQDALELSVYNIYLGVDGLSIYFVLLTTIIMPIALISNWNSITHNIKAYLIIILLLETLLLAVFLVLDVLLFYIFFESILPPLFILIGLFGSSNKVRASFYIFLYTLLGSLFLLLSILTMSSLIGTTYLDVLSKSNFEYTTQIFLFLGVFIAFAVKTPTVFLNSWLLKAHVESPLGGSIVLAGIVLKLSLYGIFRLILPLLPKISLNYTSIIFSIGIITIIYASFSTLRTIDIKELIAYSSVSHAAVYLIGVFSNIIQGIEGGILLGLGHGFVSSGLFICAGGVLYDRSGTRIISYYRGTAQVMPLFSILFFILCLGNCGAPLTLNFVGEFMSLYGTFERLPLLGLFSSSSMIFSAAYTIYMYNRIAFGGSFSKFFEENIGDVTKREFFLLFTLIIFTIMFGIYPSFILDGLHYNVTSLLFGV.

14 helical membrane-spanning segments follow: residues 2–22 (SGLL…ILSF), 68–88 (IAFI…ILFD), 112–132 (VDGL…IALI), 146–166 (LIII…LDVL), 167–187 (LFYI…GLFG), 196–216 (FYIF…ILTM), 239–259 (IFLF…VFLN), 270–290 (PLGG…YGIF), 304–324 (YTSI…FSTL), 333–353 (IAYS…SNII), 360–380 (ILLG…AGGV), 399–419 (VMPL…GAPL), 437–457 (LPLL…YTIY), and 484–504 (FFLL…PSFI).

It belongs to the complex I subunit 4 family.

Its subcellular location is the mitochondrion membrane. It catalyses the reaction a ubiquinone + NADH + 5 H(+)(in) = a ubiquinol + NAD(+) + 4 H(+)(out). In terms of biological role, core subunit of the mitochondrial membrane respiratory chain NADH dehydrogenase (Complex I) that is believed to belong to the minimal assembly required for catalysis. Complex I functions in the transfer of electrons from NADH to the respiratory chain. The immediate electron acceptor for the enzyme is believed to be ubiquinone. This Podospora anserina (strain S / ATCC MYA-4624 / DSM 980 / FGSC 10383) (Pleurage anserina) protein is NADH-ubiquinone oxidoreductase chain 4 (ND4).